The following is a 152-amino-acid chain: Ribosome maturation factor RimP (152 aa).

The protein belongs to the RimP family.

The protein resides in the cytoplasm. In terms of biological role, required for maturation of 30S ribosomal subunits. This Stutzerimonas stutzeri (strain A1501) (Pseudomonas stutzeri) protein is Ribosome maturation factor RimP.